We begin with the raw amino-acid sequence, 334 residues long: Probable GTP 3',8-cyclase (334 aa).

Residues 24–256 form the Radical SAM core domain; it reads PYGRKVTGLR…RKKYIIDGVE (233 aa). Arginine 33 is a binding site for GTP. Positions 40 and 44 each coordinate [4Fe-4S] cluster. An S-adenosyl-L-methionine-binding site is contributed by tyrosine 46. Cysteine 47 serves as a coordination point for [4Fe-4S] cluster. Lysine 85 contributes to the GTP binding site. Glycine 89 serves as a coordination point for S-adenosyl-L-methionine. Position 113 (threonine 113) interacts with GTP. Serine 137 is an S-adenosyl-L-methionine binding site. Lysine 176 contributes to the GTP binding site. [4Fe-4S] cluster-binding residues include cysteine 269 and cysteine 272. GTP is bound at residue 274–276; that stretch reads RLR. Position 286 (cysteine 286) interacts with [4Fe-4S] cluster.

Belongs to the radical SAM superfamily. MoaA family. The cofactor is [4Fe-4S] cluster.

The catalysed reaction is GTP + AH2 + S-adenosyl-L-methionine = (8S)-3',8-cyclo-7,8-dihydroguanosine 5'-triphosphate + 5'-deoxyadenosine + L-methionine + A + H(+). It participates in cofactor biosynthesis; molybdopterin biosynthesis. Functionally, catalyzes the cyclization of GTP to (8S)-3',8-cyclo-7,8-dihydroguanosine 5'-triphosphate. The chain is Probable GTP 3',8-cyclase from Methanosarcina acetivorans (strain ATCC 35395 / DSM 2834 / JCM 12185 / C2A).